The primary structure comprises 198 residues: MDFYPIAIEKLIEEFAKLPGIGYKTAQRLTLYVLNLPKEEVKEFSEALVKARGTIKYCSVCGNFTDKDPCAICSNPNRNKSIICVIEQPKDIMSMEKIREYNGVYHVLHGNISPMAGRGPEDIKLKELIRRIDGSVNEVIVATNPNVEGEATAMYISKILKPLGVKVTRIAHGVPVGGDLEYADEVTLAKALEGRIEL.

A C4-type zinc finger spans residues 58–73 (CSVCGNFTDKDPCAIC). In terms of domain architecture, Toprim spans 81–175 (SIICVIEQPK…KVTRIAHGVP (95 aa)).

This sequence belongs to the RecR family.

In terms of biological role, may play a role in DNA repair. It seems to be involved in an RecBC-independent recombinational process of DNA repair. It may act with RecF and RecO. In Clostridium botulinum (strain ATCC 19397 / Type A), this protein is Recombination protein RecR.